Here is a 255-residue protein sequence, read N- to C-terminus: Type III pantothenate kinase (255 aa).

12-19 (DIGNSYTK) contributes to the ATP binding site. A substrate-binding site is contributed by 109–112 (GDDL). Aspartate 111 serves as the catalytic Proton acceptor. Residue threonine 133 participates in ATP binding. Substrate is bound at residue threonine 185.

Belongs to the type III pantothenate kinase family. As to quaternary structure, homodimer. It depends on NH4(+) as a cofactor. K(+) is required as a cofactor.

It localises to the cytoplasm. The catalysed reaction is (R)-pantothenate + ATP = (R)-4'-phosphopantothenate + ADP + H(+). It functions in the pathway cofactor biosynthesis; coenzyme A biosynthesis; CoA from (R)-pantothenate: step 1/5. Its function is as follows. Catalyzes the phosphorylation of pantothenate (Pan), the first step in CoA biosynthesis. In Malacoplasma penetrans (strain HF-2) (Mycoplasma penetrans), this protein is Type III pantothenate kinase.